A 300-amino-acid chain; its full sequence is DNA repair protein PprA (300 aa).

Thr-88 is subject to Phosphothreonine. Residue Ser-128 is modified to Phosphoserine. Position 160 is a phosphothreonine (Thr-160).

Post-translationally, phosphorylated by RqkA in vitro. Phosphorylated primarily at Thr-88, and to a little extent at Ser-128 and Thr-160.

Its activity is regulated as follows. Phosphorylation increases DNA binding affinity. In terms of biological role, dsDNA-binding protein that contributes to the ionizing radiation resistance of D.radiodurans. Plays a role in DNA repair and genome reconstitution, and is necessary for recovery from severe genomic fragmentation as a result of exposure to severe levels of ionizing radiation. In vitro, binds to double-stranded DNA carrying strand breaks and stimulates the DNA end-joining reaction catalyzed by DNA ligases. Thus, PprA plays a critical role in a non-homologous end-joining (NHEJ) pathway for the repair of radiation-induced DNA double-strands breaks. Cannot bind to dsDNA without strand breaks or single-stranded DNA. This chain is DNA repair protein PprA (pprA), found in Deinococcus radiodurans (strain ATCC 13939 / DSM 20539 / JCM 16871 / CCUG 27074 / LMG 4051 / NBRC 15346 / NCIMB 9279 / VKM B-1422 / R1).